Reading from the N-terminus, the 447-residue chain is Putative FBD-associated F-box protein At1g61330 (447 aa).

The region spanning 10–57 is the F-box domain; the sequence is KLIKRLSDELVECILSFLPVQSTLQHRVLSKRYRDTWKLSRDLDFSGI. The 33-residue stretch at 384-416 folds into the FBD domain; the sequence is VKIIGYKGHWHELDIVEFFVKNAPSLKRLELQM.

The sequence is that of Putative FBD-associated F-box protein At1g61330 from Arabidopsis thaliana (Mouse-ear cress).